The primary structure comprises 514 residues: 2,3-bisphosphoglycerate-independent phosphoglycerate mutase (514 aa).

The Mn(2+) site is built by aspartate 14 and serine 64. The active-site Phosphoserine intermediate is the serine 64. Residues histidine 125, 155 to 156 (RD), arginine 187, arginine 193, 263 to 266 (RADR), and lysine 336 each bind substrate. Residues aspartate 403, histidine 407, aspartate 444, histidine 445, and histidine 463 each coordinate Mn(2+).

This sequence belongs to the BPG-independent phosphoglycerate mutase family. As to quaternary structure, monomer. Mn(2+) serves as cofactor.

It carries out the reaction (2R)-2-phosphoglycerate = (2R)-3-phosphoglycerate. Its pathway is carbohydrate degradation; glycolysis; pyruvate from D-glyceraldehyde 3-phosphate: step 3/5. Its function is as follows. Catalyzes the interconversion of 2-phosphoglycerate and 3-phosphoglycerate. The protein is 2,3-bisphosphoglycerate-independent phosphoglycerate mutase of Shigella flexneri.